The primary structure comprises 206 residues: MELKLLQDNGILGAGVQASPEVFEREYNEALVHQVVVAYQANARSGNRAQKDREQVKHTTKKPWRQKGTGRARAGMSSSPLWRGGGRIFPNSPEENFSQKVNKKMYRAGMRSILSQLAREGRLNVIDQFNLDAPKTKVLAEKMKAMGLDSVLIIVDQVSENLYLASRNLHKVAVVEPQHADPLALVQYKKVLVSKAAITKIEELLK.

The interval 43–78 (ARSGNRAQKDREQVKHTTKKPWRQKGTGRARAGMSS) is disordered. The span at 58-70 (HTTKKPWRQKGTG) shows a compositional bias: basic residues.

Belongs to the universal ribosomal protein uL4 family. In terms of assembly, part of the 50S ribosomal subunit.

One of the primary rRNA binding proteins, this protein initially binds near the 5'-end of the 23S rRNA. It is important during the early stages of 50S assembly. It makes multiple contacts with different domains of the 23S rRNA in the assembled 50S subunit and ribosome. Its function is as follows. Forms part of the polypeptide exit tunnel. This Polynucleobacter necessarius subsp. necessarius (strain STIR1) protein is Large ribosomal subunit protein uL4.